The chain runs to 151 residues: Deoxyuridine 5'-triphosphate nucleotidohydrolase (151 aa).

Substrate is bound by residues 70–72, Asn-83, 87–89, and Met-97; these read RSG and LID.

The protein belongs to the dUTPase family. The cofactor is Mg(2+).

The catalysed reaction is dUTP + H2O = dUMP + diphosphate + H(+). Its pathway is pyrimidine metabolism; dUMP biosynthesis; dUMP from dCTP (dUTP route): step 2/2. Functionally, this enzyme is involved in nucleotide metabolism: it produces dUMP, the immediate precursor of thymidine nucleotides and it decreases the intracellular concentration of dUTP so that uracil cannot be incorporated into DNA. The protein is Deoxyuridine 5'-triphosphate nucleotidohydrolase of Pseudomonas fluorescens (strain SBW25).